The primary structure comprises 438 residues: Xylose isomerase (438 aa).

Catalysis depends on residues H100 and D103. Mg(2+) is bound by residues E231, E267, H270, D295, D306, D308, and D338.

This sequence belongs to the xylose isomerase family. In terms of assembly, homotetramer. The cofactor is Mg(2+).

The protein resides in the cytoplasm. The enzyme catalyses alpha-D-xylose = alpha-D-xylulofuranose. This chain is Xylose isomerase, found in Pseudomonas fluorescens (strain Pf0-1).